Consider the following 149-residue polypeptide: uncharacterized protein (149 aa).

2 disordered regions span residues Thr-24 to Glu-74 and Ala-129 to Pro-149. The span at Glu-28 to Val-42 shows a compositional bias: basic and acidic residues. A coiled-coil region spans residues Ser-102–Gln-131.

This is an uncharacterized protein from Archaeoglobus fulgidus (strain ATCC 49558 / DSM 4304 / JCM 9628 / NBRC 100126 / VC-16).